Here is a 677-residue protein sequence, read N- to C-terminus: O-fucosyltransferase 27 (677 aa).

A helical; Signal-anchor for type II membrane protein transmembrane segment spans residues 15-35; it reads WIGLLGLVLSAFSLLVHFLLA. The N-linked (GlcNAc...) asparagine glycan is linked to N130. Positions 410 to 437 are disordered; it reads PPSIEVETKHDSLKSTRQRPQPLPPPPA. N542 and N592 each carry an N-linked (GlcNAc...) asparagine glycan. The interval 619 to 677 is disordered; that stretch reads NAEKEEDLDEEDLSSSGLFFGHKESGGNNNGNNETVNSEANNKEEGQLEDQEELEGSER. Acidic residues predominate over residues 622–631; it reads KEEDLDEEDL. Low complexity predominate over residues 644 to 658; sequence GGNNNGNNETVNSEA. N651 is a glycosylation site (N-linked (GlcNAc...) asparagine). Over residues 665–677 the composition is skewed to acidic residues; it reads QLEDQEELEGSER.

Belongs to the glycosyltransferase GT106 family.

The protein localises to the membrane. Its pathway is glycan metabolism. This chain is O-fucosyltransferase 27, found in Arabidopsis thaliana (Mouse-ear cress).